The sequence spans 102 residues: Putative septation protein SpoVG 1 (102 aa).

It belongs to the SpoVG family.

In terms of biological role, could be involved in septation. The sequence is that of Putative septation protein SpoVG 1 from Listeria innocua serovar 6a (strain ATCC BAA-680 / CLIP 11262).